A 310-amino-acid polypeptide reads, in one-letter code: Low-salt glycan biosynthesis protein Agl12 (310 aa).

Residues glycine 7 to glycine 13, aspartate 32 to threonine 35, and aspartate 58 to isoleucine 59 each bind NAD(+). Position 82 (serine 82) interacts with substrate. NAD(+) is bound at residue threonine 97. Substrate is bound by residues threonine 122 and threonine 122–glutamate 124. Residue aspartate 123 is the Proton donor of the active site. Catalysis depends on proton acceptor residues glutamate 124 and tyrosine 146. Residue tyrosine 146–lysine 150 participates in NAD(+) binding. Residue asparagine 175 participates in substrate binding. Asparagine 176 is a binding site for NAD(+). Substrate is bound by residues lysine 185–leucine 186, proline 201–tyrosine 203, arginine 210, asparagine 245, and arginine 269–histidine 272.

It belongs to the NAD(P)-dependent epimerase/dehydratase family. dTDP-glucose dehydratase subfamily. NAD(+) serves as cofactor.

It functions in the pathway protein modification; protein glycosylation. It participates in cell surface structure biogenesis; S-layer biogenesis. In terms of biological role, lyase involved in N-glycan biosynthetic pathway that takes place under low-salt conditions (1.75 M instead of 3.4 M). Participates in the formation of the tetrasaccharide present at 'Asn-532' of S-layer glycoprotein Csg, consisting of a sulfated hexose, 2 hexoses and rhamnose. Involved in the addition of final rhamnose (sugar 4) of the tetrasaccharide on the dolichol phosphate carrier. The sequence is that of Low-salt glycan biosynthesis protein Agl12 (agl12) from Haloferax volcanii (strain ATCC 29605 / DSM 3757 / JCM 8879 / NBRC 14742 / NCIMB 2012 / VKM B-1768 / DS2) (Halobacterium volcanii).